The chain runs to 475 residues: Ribulose bisphosphate carboxylase large chain (475 aa).

An N6,N6,N6-trimethyllysine modification is found at lysine 14. Residues asparagine 123 and threonine 173 each coordinate substrate. Lysine 175 acts as the Proton acceptor in catalysis. A substrate-binding site is contributed by lysine 177. Mg(2+)-binding residues include lysine 201, aspartate 203, and glutamate 204. Lysine 201 bears the N6-carboxylysine mark. The active-site Proton acceptor is histidine 294. 3 residues coordinate substrate: arginine 295, histidine 327, and serine 379.

It belongs to the RuBisCO large chain family. Type I subfamily. In terms of assembly, heterohexadecamer of 8 large chains and 8 small chains; disulfide-linked. The disulfide link is formed within the large subunit homodimers. Mg(2+) serves as cofactor. Post-translationally, the disulfide bond which can form in the large chain dimeric partners within the hexadecamer appears to be associated with oxidative stress and protein turnover.

It is found in the plastid. The protein localises to the chloroplast. The catalysed reaction is 2 (2R)-3-phosphoglycerate + 2 H(+) = D-ribulose 1,5-bisphosphate + CO2 + H2O. It carries out the reaction D-ribulose 1,5-bisphosphate + O2 = 2-phosphoglycolate + (2R)-3-phosphoglycerate + 2 H(+). Its function is as follows. RuBisCO catalyzes two reactions: the carboxylation of D-ribulose 1,5-bisphosphate, the primary event in carbon dioxide fixation, as well as the oxidative fragmentation of the pentose substrate in the photorespiration process. Both reactions occur simultaneously and in competition at the same active site. The sequence is that of Ribulose bisphosphate carboxylase large chain from Actinidia chinensis (Kiwi).